A 255-amino-acid polypeptide reads, in one-letter code: uncharacterized protein (255 aa).

Residues 253–255 carry the Microbody targeting signal motif; it reads SKI.

The protein belongs to the enoyl-CoA hydratase/isomerase family.

Its subcellular location is the peroxisome. This is an uncharacterized protein from Caenorhabditis elegans.